The primary structure comprises 207 residues: Superoxide dismutase [Mn] (207 aa).

Mn(2+)-binding residues include histidine 28, histidine 76, aspartate 160, and histidine 164.

The protein belongs to the iron/manganese superoxide dismutase family. It depends on Mn(2+) as a cofactor.

The enzyme catalyses 2 superoxide + 2 H(+) = H2O2 + O2. Its function is as follows. Destroys superoxide anion radicals which are normally produced within the cells and which are toxic to biological systems. This is Superoxide dismutase [Mn] (sodA) from Mycolicibacterium fortuitum (Mycobacterium fortuitum).